The chain runs to 256 residues: Putative adhesin P1-like protein MPN_132 (256 aa).

The span at 56–72 (AVSESQAATSSTTTTAT) shows a compositional bias: low complexity. 2 disordered regions span residues 56–115 (AVSE…PYLH) and 149–235 (FGTD…EVVG). Residues 96 to 112 (KASTQGSGQTNSQNTSP) are compositionally biased toward polar residues. Low complexity-rich tracts occupy residues 155–179 (TQPQ…LGSV) and 211–222 (STSDGNTSSTNN).

This sequence belongs to the adhesin P1 family.

This Mycoplasma pneumoniae (strain ATCC 29342 / M129 / Subtype 1) (Mycoplasmoides pneumoniae) protein is Putative adhesin P1-like protein MPN_132.